Consider the following 184-residue polypeptide: Photosystem I assembly protein Ycf4 (184 aa).

Helical transmembrane passes span 22–42 and 57–77; these read FCWAFILFLGSLGFLLVGTSS and IIFFPQGIVMSFYGIAGLFIS.

Belongs to the Ycf4 family.

Its subcellular location is the plastid. The protein localises to the chloroplast thylakoid membrane. Functionally, seems to be required for the assembly of the photosystem I complex. This chain is Photosystem I assembly protein Ycf4, found in Platanus occidentalis (Sycamore).